The primary structure comprises 387 residues: Cobalt-precorrin-5B C(1)-methyltransferase (387 aa).

This sequence belongs to the CbiD family.

The catalysed reaction is Co-precorrin-5B + S-adenosyl-L-methionine = Co-precorrin-6A + S-adenosyl-L-homocysteine. It functions in the pathway cofactor biosynthesis; adenosylcobalamin biosynthesis; cob(II)yrinate a,c-diamide from sirohydrochlorin (anaerobic route): step 6/10. Catalyzes the methylation of C-1 in cobalt-precorrin-5B to form cobalt-precorrin-6A. The sequence is that of Cobalt-precorrin-5B C(1)-methyltransferase from Desulfitobacterium hafniense (strain Y51).